The following is a 113-amino-acid chain: Cell division protein FtsB (113 aa).

The Cytoplasmic portion of the chain corresponds to 1–3; that stretch reads MRL. Residues 4–21 traverse the membrane as a helical segment; sequence ISLLLFVLLLAIQYPLWL. Topologically, residues 22–113 are periplasmic; it reads GKGGWLRVWE…PNSPAATGRH (92 aa). Residues 34 to 63 adopt a coiled-coil conformation; it reads HQVQEQATRNQMLKLRNAKLEGEVKDLQDG. Positions 93–113 are disordered; the sequence is KVSATPPLPPPPNSPAATGRH.

Belongs to the FtsB family. As to quaternary structure, part of a complex composed of FtsB, FtsL and FtsQ.

It localises to the cell inner membrane. In terms of biological role, essential cell division protein. May link together the upstream cell division proteins, which are predominantly cytoplasmic, with the downstream cell division proteins, which are predominantly periplasmic. The protein is Cell division protein FtsB of Cupriavidus pinatubonensis (strain JMP 134 / LMG 1197) (Cupriavidus necator (strain JMP 134)).